The chain runs to 495 residues: Genome polyprotein (495 aa).

Residues 1–445 (MRCIGISNRD…LNQVFGTIYG (445 aa)) lie on the Extracellular side of the membrane. Cystine bridges form between cysteine 3–cysteine 30, cysteine 60–cysteine 121, cysteine 74–cysteine 105, and cysteine 92–cysteine 116. Asparagine 67 carries N-linked (GlcNAc...) asparagine; by host glycosylation. Residues 98–111 (DRGWGNGCGLFGKG) are fusion peptide. The N-linked (GlcNAc...) asparagine; by host glycan is linked to asparagine 153. 2 cysteine pairs are disulfide-bonded: cysteine 185–cysteine 285 and cysteine 302–cysteine 333. A helical transmembrane segment spans residues 446-466 (AAFSGVSWTMKILIGVIITCI). Residues 467-472 (GMNSRS) lie on the Cytoplasmic side of the membrane. Residues 473–493 (TSLSVSLVLVGVVTLYLGGMV) traverse the membrane as a helical segment. Residues 494-495 (HA) lie on the Extracellular side of the membrane.

As to quaternary structure, homodimer; in the endoplasmic reticulum and Golgi. Interacts with protein prM. Interacts with non-structural protein 1. In terms of processing, N-glycosylated. Specific enzymatic cleavages in vivo yield mature proteins. Cleavages in the lumen of endoplasmic reticulum are performed by host signal peptidase, wereas cleavages in the cytoplasmic side are performed by serine protease NS3. Signal cleavage at the 2K-4B site requires a prior NS3 protease-mediated cleavage at the 4A-2K site.

It localises to the virion membrane. The protein localises to the host endoplasmic reticulum membrane. Functionally, binds to host cell surface receptor and mediates fusion between viral and cellular membranes. Envelope protein is synthesized in the endoplasmic reticulum in the form of heterodimer with protein prM. They play a role in virion budding in the ER, and the newly formed immature particle is covered with 60 spikes composed of heterodimer between precursor prM and envelope protein E. The virion is transported to the Golgi apparatus where the low pH causes dissociation of PrM-E heterodimers and formation of E homodimers. prM-E cleavage is inefficient, and many virions are only partially matured. These uncleaved prM would play a role in immune evasion. The sequence is that of Genome polyprotein from Aedes aegypti (Yellowfever mosquito).